We begin with the raw amino-acid sequence, 239 residues long: NAD-dependent protein deacylase (239 aa).

The region spanning 1 to 234 (MENLNIVTLT…KKVYDYLREK (234 aa)) is the Deacetylase sirtuin-type domain. Residues 11–30 (GAGISAESGIPTFRGKDGLW) and 89–92 (QNVD) each bind NAD(+). The active-site Proton acceptor is His-107. Cys-115, Cys-118, Cys-136, and Cys-139 together coordinate Zn(2+). NAD(+) contacts are provided by residues 176 to 178 (GTS), 202 to 204 (NPE), and Ala-220.

Belongs to the sirtuin family. Class III subfamily. Zn(2+) is required as a cofactor.

Its subcellular location is the cytoplasm. It catalyses the reaction N(6)-acetyl-L-lysyl-[protein] + NAD(+) + H2O = 2''-O-acetyl-ADP-D-ribose + nicotinamide + L-lysyl-[protein]. In terms of biological role, NAD-dependent protein deacetylase which modulates the activities of several proteins which are inactive in their acetylated form. The polypeptide is NAD-dependent protein deacylase (Aquifex aeolicus (strain VF5)).